Consider the following 525-residue polypeptide: Putative ribose/galactose/methyl galactoside import ATP-binding protein (525 aa).

The segment at 1–20 (MSGSATASPPAKPDLPSSDG) is disordered. ABC transporter domains lie at 33-269 (LEIS…VGRE) and 279-523 (KPAG…SGHR). An ATP-binding site is contributed by 65 to 72 (GENGAGKS).

This sequence belongs to the ABC transporter superfamily. Carbohydrate importer 2 (CUT2) (TC 3.A.1.2) family.

The protein localises to the cell inner membrane. The catalysed reaction is D-ribose(out) + ATP + H2O = D-ribose(in) + ADP + phosphate + H(+). It carries out the reaction D-galactose(out) + ATP + H2O = D-galactose(in) + ADP + phosphate + H(+). Its function is as follows. Part of an ABC transporter complex involved in carbohydrate import. Could be involved in ribose, galactose and/or methyl galactoside import. Responsible for energy coupling to the transport system. The polypeptide is Putative ribose/galactose/methyl galactoside import ATP-binding protein (Pseudomonas syringae pv. tomato (strain ATCC BAA-871 / DC3000)).